Consider the following 65-residue polypeptide: Putative cytochrome c oxidase subunit 5C-4 (65 aa).

The chain crosses the membrane as a helical span at residues 20 to 37; the sequence is EIIYGITLGFAVGGLWKM.

The protein belongs to the cytochrome c oxidase subunit 5C family.

Its subcellular location is the mitochondrion inner membrane. Functionally, this protein is one of the nuclear-coded polypeptide chains of cytochrome c oxidase, the terminal oxidase in mitochondrial electron transport. The chain is Putative cytochrome c oxidase subunit 5C-4 from Arabidopsis thaliana (Mouse-ear cress).